Here is a 299-residue protein sequence, read N- to C-terminus: GTPase Era (299 aa).

An Era-type G domain is found at 5-175 (RSGFVCLVGR…IDVLAAALPP (171 aa)). Residues 13-20 (GRPNTGKS) are G1. 13–20 (GRPNTGKS) contributes to the GTP binding site. Residues 39 to 43 (QTTRH) are G2. The tract at residues 60–63 (DTPG) is G3. GTP-binding positions include 60 to 64 (DTPGL) and 124 to 127 (TKID). The segment at 124–127 (TKID) is G4. The segment at 154-156 (VSA) is G5. The KH type-2 domain maps to 206–285 (VRDELPHSLA…YLDLRVKVAK (80 aa)).

This sequence belongs to the TRAFAC class TrmE-Era-EngA-EngB-Septin-like GTPase superfamily. Era GTPase family. In terms of assembly, monomer.

It localises to the cell envelope. Its subcellular location is the secreted. The protein resides in the cell wall. Exhibits GTPase activity. Binds RNA but is probably not involved in ribosome assembly in mycobacteria. This Mycobacterium avium (strain 104) protein is GTPase Era.